We begin with the raw amino-acid sequence, 291 residues long: MYRGSMVALVTPMKADGSLDWDALHKLIDWHLEQGTHAIVAVGTTGESATLNMAEHLEVISKVVDQVNGRVPVIAGTGANSTSEALELTQGAKQAKADACLLVTPYYNKPSQEGLYQHYCYLAREVAIPQFLYNVPGRTAVDMLPETVARLATVENIVGIKDATASMERLQQMQALTDDSFIFLSGDDATSVDFMALGGHGEISVTANVVPAQTAKICELALAGNVEQARELDRPLAPLHEALFLEANPVPVKWAMARMGFLDGALRLPLTPLNAVYHAQLEAAMLSAGAI.

Pyruvate is bound at residue threonine 45. Tyrosine 133 acts as the Proton donor/acceptor in catalysis. Lysine 161 functions as the Schiff-base intermediate with substrate in the catalytic mechanism. Isoleucine 203 serves as a coordination point for pyruvate.

It belongs to the DapA family. In terms of assembly, homotetramer; dimer of dimers.

Its subcellular location is the cytoplasm. The catalysed reaction is L-aspartate 4-semialdehyde + pyruvate = (2S,4S)-4-hydroxy-2,3,4,5-tetrahydrodipicolinate + H2O + H(+). It functions in the pathway amino-acid biosynthesis; L-lysine biosynthesis via DAP pathway; (S)-tetrahydrodipicolinate from L-aspartate: step 3/4. In terms of biological role, catalyzes the condensation of (S)-aspartate-beta-semialdehyde [(S)-ASA] and pyruvate to 4-hydroxy-tetrahydrodipicolinate (HTPA). This is 4-hydroxy-tetrahydrodipicolinate synthase from Teredinibacter turnerae (strain ATCC 39867 / T7901).